The following is a 345-amino-acid chain: tRNA N6-adenosine threonylcarbamoyltransferase (345 aa).

Residues His-109 and His-113 each contribute to the Fe cation site. Residues 136-140, Asp-169, Gly-182, Asp-186, and Asn-284 contribute to the substrate site; that span reads TVSGG. Asp-312 serves as a coordination point for Fe cation.

This sequence belongs to the KAE1 / TsaD family. Fe(2+) serves as cofactor.

The protein localises to the cytoplasm. It catalyses the reaction L-threonylcarbamoyladenylate + adenosine(37) in tRNA = N(6)-L-threonylcarbamoyladenosine(37) in tRNA + AMP + H(+). Required for the formation of a threonylcarbamoyl group on adenosine at position 37 (t(6)A37) in tRNAs that read codons beginning with adenine. Is involved in the transfer of the threonylcarbamoyl moiety of threonylcarbamoyl-AMP (TC-AMP) to the N6 group of A37, together with TsaE and TsaB. TsaD likely plays a direct catalytic role in this reaction. The chain is tRNA N6-adenosine threonylcarbamoyltransferase from Chlorobium phaeovibrioides (strain DSM 265 / 1930) (Prosthecochloris vibrioformis (strain DSM 265)).